Consider the following 124-residue polypeptide: Phosphoribosyl-ATP pyrophosphatase (124 aa).

It belongs to the PRA-PH family.

It localises to the cytoplasm. The catalysed reaction is 1-(5-phospho-beta-D-ribosyl)-ATP + H2O = 1-(5-phospho-beta-D-ribosyl)-5'-AMP + diphosphate + H(+). It functions in the pathway amino-acid biosynthesis; L-histidine biosynthesis; L-histidine from 5-phospho-alpha-D-ribose 1-diphosphate: step 2/9. In Ralstonia pickettii (strain 12J), this protein is Phosphoribosyl-ATP pyrophosphatase.